The chain runs to 430 residues: Small ribosomal subunit protein uS9m (430 aa).

The N-terminal 34 residues, 1-34 (MLSRLFLRHSNLRFVTLVSSKSNSQIFSSFIRPL), are a transit peptide targeting the mitochondrion. A disordered region spans residues 32 to 97 (RPLSTNSSGG…GGEGKWPEEP (66 aa)). Positions 39 to 48 (SGGGGNGDGN) are enriched in gly residues. Over residues 68-79 (GPFSSDDSFGSS) the composition is skewed to low complexity. Over residues 80-91 (GVAGSGLPGGEG) the composition is skewed to gly residues.

Belongs to the universal ribosomal protein uS9 family. Interacts (via C terminus) with PIA2. Component of the mitochondrial ribosome small subunit. In terms of tissue distribution, expressed in root tips, young leaves, flowers and siliques.

The protein resides in the mitochondrion. Mitochondrial ribosomal protein required for central cell maturation. May work together with PIA2 in controlling female gametophyte development, possibly by regulating the expression of some mitochondrial proteins. In Arabidopsis thaliana (Mouse-ear cress), this protein is Small ribosomal subunit protein uS9m.